The following is a 448-amino-acid chain: Trk system potassium uptake protein TrkA homolog 1 (448 aa).

In terms of domain architecture, RCK N-terminal 1 spans 1–124 (MKAVIIGAGE…RAQVGVDLMI (124 aa)). Residues 7–11 (GAGEV), aspartate 29, 70–71 (TG), and arginine 101 contribute to the NAD(+) site. Residues 144–225 (IDAEMFAEGK…MEDLESVFGS (82 aa)) enclose the RCK C-terminal 1 domain. The 119-residue stretch at 230–348 (RTRILLIGCG…FEMVGIDMAV (119 aa)) folds into the RCK N-terminal 2 domain. 232–262 (RILLIGCGIVGMYLAKLIDKEENADLRIIEH) provides a ligand contact to NAD(+). The region spanning 368–448 (QTLTTIEGER…AASEVEKYFK (81 aa)) is the RCK C-terminal 2 domain.

Part of a potassium transport system. This is Trk system potassium uptake protein TrkA homolog 1 (trkA1) from Methanosarcina mazei (strain ATCC BAA-159 / DSM 3647 / Goe1 / Go1 / JCM 11833 / OCM 88) (Methanosarcina frisia).